We begin with the raw amino-acid sequence, 456 residues long: UDP-N-acetylmuramoylalanine--D-glutamate ligase (456 aa).

Residue 113–119 (GTNGKTT) coordinates ATP.

Belongs to the MurCDEF family.

It is found in the cytoplasm. It catalyses the reaction UDP-N-acetyl-alpha-D-muramoyl-L-alanine + D-glutamate + ATP = UDP-N-acetyl-alpha-D-muramoyl-L-alanyl-D-glutamate + ADP + phosphate + H(+). It participates in cell wall biogenesis; peptidoglycan biosynthesis. Functionally, cell wall formation. Catalyzes the addition of glutamate to the nucleotide precursor UDP-N-acetylmuramoyl-L-alanine (UMA). The chain is UDP-N-acetylmuramoylalanine--D-glutamate ligase from Rippkaea orientalis (strain PCC 8801 / RF-1) (Cyanothece sp. (strain PCC 8801)).